A 459-amino-acid chain; its full sequence is Pentatricopeptide repeat-containing protein At5g18390, mitochondrial (459 aa).

The N-terminal 7 residues, 1 to 7 (MLLLRRY), are a transit peptide targeting the mitochondrion. PPR repeat units lie at residues 110-144 (TSMEYEELAKSLASHKKYESMWKILKQMKDLSLDI), 145-175 (SGETLCFIIEQYGKNGHVDQAVELFNGVPKT), 181-215 (TVDVYNSLLHALCDVKMFHGAYALIRRMIRKGLKP), 216-250 (DKRTYAILVNGWCSAGKMKEAQEFLDEMSRRGFNP), 251-285 (PARGRDLLIEGLLNAGYLESAKEMVSKMTKGGFVP), 286-320 (DIQTFNILIEAISKSGEVEFCIEMYYTACKLGLCV), 321-355 (DIDTYKTLIPAVSKIGKIDEAFRLLNNCVEDGHKP), 356-390 (FPSLYAPIIKGMCRNGMFDDAFSFFSDMKVKAHPP), and 391-425 (NRPVYTMLITMCGRGGKFVDAANYLVEMTEMGLVP).

The protein belongs to the PPR family. P subfamily.

The protein resides in the mitochondrion. The protein is Pentatricopeptide repeat-containing protein At5g18390, mitochondrial of Arabidopsis thaliana (Mouse-ear cress).